The chain runs to 285 residues: HTH-type transcriptional regulator YofA (285 aa).

Residues methionine 1–threonine 58 form the HTH lysR-type domain. Residues isoleucine 18–histidine 37 constitute a DNA-binding region (H-T-H motif).

The protein belongs to the LysR transcriptional regulatory family.

The protein localises to the cytoplasm. Its function is as follows. Regulates expression of the cell division protein ftsW, and is essential for cell viability during stationary phase. This Bacillus subtilis (strain 168) protein is HTH-type transcriptional regulator YofA (yofA).